A 630-amino-acid chain; its full sequence is E3 ubiquitin-protein ligase TRIM41 (630 aa).

The RING-type; degenerate zinc finger occupies 20-61; that stretch reads CAICLDYFTDPVSIGCGHNFCRVCVTQLWGGEDEEDRDELDR. A compositionally biased stretch (acidic residues) spans 51–75; the sequence is EDEEDRDELDREEEEEEVGEEEEVE. 2 disordered regions span residues 51 to 97 and 148 to 176; these read EDEE…GDME and EDED…PPPA. Threonine 85 is modified (phosphothreonine). Positions 148 to 166 are enriched in acidic residues; it reads EDEDEEEEVLEEDEEEELD. A B box-type zinc finger spans residues 222–263; that stretch reads NEQGICPRHQEALKLFCEVDEEAICVVCRESRSHKQHSVVPL. Zn(2+) is bound by residues cysteine 227, histidine 230, cysteine 249, and histidine 255. Lysine 256 is covalently cross-linked (Glycyl lysine isopeptide (Lys-Gly) (interchain with G-Cter in SUMO2)). Positions 281–374 form a coiled coil; sequence LRKHLEAVQK…AEAQERSQQG (94 aa). In terms of domain architecture, B30.2/SPRY spans 413–630; sequence LTDAIVRKMS…SKGTRIKLCP (218 aa). Position 447 is a phosphoserine (serine 447). Residues 503-535 are disordered; that stretch reads ARESTHHKEKVGSGGSSVSSGDASSSRHHHRRR.

It belongs to the TRIM/RBCC family. Interacts with PRKCA. Interacts with NOD2. Interacts with TRIM17; this interaction prevents TRIM41 activity on ZSCAN2. Post-translationally, auto-ubiquitinated.

The protein localises to the cytoplasm. It is found in the nucleus. It carries out the reaction S-ubiquitinyl-[E2 ubiquitin-conjugating enzyme]-L-cysteine + [acceptor protein]-L-lysine = [E2 ubiquitin-conjugating enzyme]-L-cysteine + N(6)-ubiquitinyl-[acceptor protein]-L-lysine.. The protein operates within protein modification; protein ubiquitination. Its function is as follows. E3 ligase that plays essential roles in innate antiviral response. Directly binds to influenza A virus or vesicular stomatitis virus nucleoproteins and targets them for ubiquitination and proteasomal degradation, thereby limiting viral infections. Activates the innate antiviral response by catalyzing monoubiquitination of CGAS, thereby activating CGAS. Also involved in innate antiviral response by mediating 'Lys-63'-linked polyubiquitylation of BCL10 which in turn hubs NEMO for activation of NF-kappa-B and IRF3 pathways. Catalyzes the ubiquitin-mediated degradation of other substrates including protein kinase C, ZSCAN21 or TOP3B suggesting additional roles besides its function in immune response. In Mus musculus (Mouse), this protein is E3 ubiquitin-protein ligase TRIM41.